We begin with the raw amino-acid sequence, 291 residues long: tRNA U34 carboxymethyltransferase (291 aa).

Carboxy-S-adenosyl-L-methionine contacts are provided by residues lysine 61, tryptophan 75, lysine 80, glycine 100, aspartate 122 to serine 124, valine 149 to glutamate 150, tyrosine 169, and arginine 284.

Belongs to the class I-like SAM-binding methyltransferase superfamily. CmoB family. Homotetramer.

The catalysed reaction is carboxy-S-adenosyl-L-methionine + 5-hydroxyuridine(34) in tRNA = 5-carboxymethoxyuridine(34) in tRNA + S-adenosyl-L-homocysteine + H(+). In terms of biological role, catalyzes carboxymethyl transfer from carboxy-S-adenosyl-L-methionine (Cx-SAM) to 5-hydroxyuridine (ho5U) to form 5-carboxymethoxyuridine (cmo5U) at position 34 in tRNAs. The protein is tRNA U34 carboxymethyltransferase of Campylobacter jejuni subsp. doylei (strain ATCC BAA-1458 / RM4099 / 269.97).